The chain runs to 549 residues: S-methyl thiourocanate hydratase (549 aa).

11 residues coordinate NAD(+): Met49, Gly173, Met174, Gly175, Asp193, Ser198, Asn239, Ala240, Gln260, Val270, and Tyr318.

Belongs to the urocanase family. S-methyl thiourocanate hydratase subfamily. It depends on NAD(+) as a cofactor.

It catalyses the reaction S-methyl-(E)-thiourocanate + H2O = S-methyl-thiohydantoin-5-propanoate. Its function is as follows. Hydratase involved in the catabolism of S-methyl ergothioneine. Catalyzes the 1,4-addition of H(2)O to S-methyl thiourocanate, leading to the formation of S-methyl-thiohydantoin-5-propanoate, the second step in S-methyl ergothioneine degradation. Cannot use urocanate or thiourocanate as substrate. The protein is S-methyl thiourocanate hydratase of Variovorax sp. (strain JCM 16519 / RA8).